The sequence spans 129 residues: MAQSRERLAEEYSVLAQVAEELQREIQLAQTLIAEVDSAILALKNISSLEDGKEILVPVSAGVYVRASIKRQEKFLVAIGSNILVEKSLDEAVEFLNKRKEELSQLVERRMNDLNKVVARIREIESSIR.

It belongs to the prefoldin alpha subunit family. Heterohexamer of two alpha and four beta subunits.

The protein resides in the cytoplasm. In terms of biological role, molecular chaperone capable of stabilizing a range of proteins. Seems to fulfill an ATP-independent, HSP70-like function in archaeal de novo protein folding. This is Prefoldin subunit alpha from Thermofilum pendens (strain DSM 2475 / Hrk 5).